The chain runs to 426 residues: Gamma-glutamyl phosphate reductase (426 aa).

It belongs to the gamma-glutamyl phosphate reductase family.

The protein localises to the cytoplasm. The catalysed reaction is L-glutamate 5-semialdehyde + phosphate + NADP(+) = L-glutamyl 5-phosphate + NADPH + H(+). Its pathway is amino-acid biosynthesis; L-proline biosynthesis; L-glutamate 5-semialdehyde from L-glutamate: step 2/2. Catalyzes the NADPH-dependent reduction of L-glutamate 5-phosphate into L-glutamate 5-semialdehyde and phosphate. The product spontaneously undergoes cyclization to form 1-pyrroline-5-carboxylate. The chain is Gamma-glutamyl phosphate reductase from Cupriavidus necator (strain ATCC 17699 / DSM 428 / KCTC 22496 / NCIMB 10442 / H16 / Stanier 337) (Ralstonia eutropha).